The primary structure comprises 487 residues: MDEPMNDAPGAQVKVTFTTNEADLQLPEEKRQLLVPADIRRYGLSRILNSDLMLDSGSIPFDFLVNGSFLRSSLEDYLNSEGLSLETNLTLQYVRSLIPPVFEASFEHDDWVSSVDALTATSPAGRWSGENFSRGQERILSASYDGLLRIWNASGEVLVTAPSASHGGHSASIKAAKFISSTQIASTGMDRSVRVWKYTDPGASGQAELKPTLELYGHRASVDSLEVHGPSKRILTASADGSVALWSASKSSSPEADASLLPNAHTSKRRKVASSVTTPQRGPLFLMQIHNAPATAAVFDPRDHTVGYSVSQDHTVKTLDLTTGSVVANLTLSHSLLSLCAIPRPNGAPLLAVGTSARHITLVDPRASAATTSVMTLRGHTNKVVALAANPENEYSLVSGSHDGTCRIWDLRSVRPASGGESEGGVGGNVSEPVYVFERESRQGKKKSVAGEGAKVFGVVWDRELGILSGGEDKKVQVNRGRDVVRE.

The interval 13–95 (VKVTFTTNEA…ETNLTLQYVR (83 aa)) is ubiquitin-like (UBL) domain. WD repeat units lie at residues 122 to 161 (SPAGRWSGENFSRGQERILSASYDGLLRIWNASGEVLVTA), 168 to 206 (GHSASIKAAKFISSTQIASTGMDRSVRVWKYTDPGASGQ), 217 to 256 (GHRASVDSLEVHGPSKRILTASADGSVALWSASKSSSPEA), 379 to 419 (GHTN…PASG), and 451 to 487 (GEGAKVFGVVWDRELGILSGGEDKKVQVNRGRDVVRE). The interval 253–277 (SPEADASLLPNAHTSKRRKVASSVT) is disordered.

The protein belongs to the WD repeat WDR12/YTM1 family. In terms of assembly, component of the NOP7 complex, composed of ERB1, NOP7 and YTM1. The complex is held together by ERB1, which interacts with NOP7 via its N-terminal domain and with YTM1 via a high-affinity interaction between the seven-bladed beta-propeller domains of the 2 proteins. The NOP7 complex associates with the 66S pre-ribosome. Interacts (via UBL domain) with MDN1 (via VWFA/MIDAS domain).

It is found in the nucleus. The protein resides in the nucleolus. Its subcellular location is the nucleoplasm. In terms of biological role, component of the NOP7 complex, which is required for maturation of the 25S and 5.8S ribosomal RNAs and formation of the 60S ribosome. The polypeptide is Ribosome biogenesis protein YTM1 (Podospora anserina (strain S / ATCC MYA-4624 / DSM 980 / FGSC 10383) (Pleurage anserina)).